Consider the following 231-residue polypeptide: Phosphatidylserine decarboxylase proenzyme (231 aa).

Residue serine 188 is the Schiff-base intermediate with substrate; via pyruvic acid of the active site. Serine 188 bears the Pyruvic acid (Ser); by autocatalysis mark.

It belongs to the phosphatidylserine decarboxylase family. PSD-A subfamily. Heterodimer of a large membrane-associated beta subunit and a small pyruvoyl-containing alpha subunit. Requires pyruvate as cofactor. Is synthesized initially as an inactive proenzyme. Formation of the active enzyme involves a self-maturation process in which the active site pyruvoyl group is generated from an internal serine residue via an autocatalytic post-translational modification. Two non-identical subunits are generated from the proenzyme in this reaction, and the pyruvate is formed at the N-terminus of the alpha chain, which is derived from the carboxyl end of the proenzyme. The post-translation cleavage follows an unusual pathway, termed non-hydrolytic serinolysis, in which the side chain hydroxyl group of the serine supplies its oxygen atom to form the C-terminus of the beta chain, while the remainder of the serine residue undergoes an oxidative deamination to produce ammonia and the pyruvoyl prosthetic group on the alpha chain.

It is found in the cell membrane. It catalyses the reaction a 1,2-diacyl-sn-glycero-3-phospho-L-serine + H(+) = a 1,2-diacyl-sn-glycero-3-phosphoethanolamine + CO2. The protein operates within phospholipid metabolism; phosphatidylethanolamine biosynthesis; phosphatidylethanolamine from CDP-diacylglycerol: step 2/2. Its function is as follows. Catalyzes the formation of phosphatidylethanolamine (PtdEtn) from phosphatidylserine (PtdSer). This Rickettsia bellii (strain OSU 85-389) protein is Phosphatidylserine decarboxylase proenzyme.